We begin with the raw amino-acid sequence, 541 residues long: Light-independent protochlorophyllide reductase subunit B (541 aa).

Asp-36 is a binding site for [4Fe-4S] cluster. Catalysis depends on Asp-287, which acts as the Proton donor. A substrate-binding site is contributed by Gly-422 to Leu-423.

This sequence belongs to the ChlB/BchB/BchZ family. As to quaternary structure, protochlorophyllide reductase is composed of three subunits; BchL, BchN and BchB. Forms a heterotetramer of two BchB and two BchN subunits. [4Fe-4S] cluster serves as cofactor.

The enzyme catalyses chlorophyllide a + oxidized 2[4Fe-4S]-[ferredoxin] + 2 ADP + 2 phosphate = protochlorophyllide a + reduced 2[4Fe-4S]-[ferredoxin] + 2 ATP + 2 H2O. It participates in porphyrin-containing compound metabolism; bacteriochlorophyll biosynthesis (light-independent). Component of the dark-operative protochlorophyllide reductase (DPOR) that uses Mg-ATP and reduced ferredoxin to reduce ring D of protochlorophyllide (Pchlide) to form chlorophyllide a (Chlide). This reaction is light-independent. The NB-protein (BchN-BchB) is the catalytic component of the complex. The sequence is that of Light-independent protochlorophyllide reductase subunit B from Rhodopseudomonas palustris (strain HaA2).